Reading from the N-terminus, the 374-residue chain is Ribosomal RNA large subunit methyltransferase G (374 aa).

The protein belongs to the methyltransferase superfamily. RlmG family.

It localises to the cytoplasm. The catalysed reaction is guanosine(1835) in 23S rRNA + S-adenosyl-L-methionine = N(2)-methylguanosine(1835) in 23S rRNA + S-adenosyl-L-homocysteine + H(+). Functionally, specifically methylates the guanine in position 1835 (m2G1835) of 23S rRNA. The protein is Ribosomal RNA large subunit methyltransferase G of Pseudomonas syringae pv. syringae (strain B728a).